Consider the following 259-residue polypeptide: Global transcriptional regulator CodY (259 aa).

The GAF domain stretch occupies residues 1 to 155; that stretch reads MDLLSKTRRI…GATVVGMEIL (155 aa). Positions 203–222 form a DNA-binding region, H-T-H motif; it reads ASKIADRVGITRSVIVNALR.

The protein belongs to the CodY family.

It is found in the cytoplasm. In terms of biological role, DNA-binding global transcriptional regulator which is involved in the adaptive response to starvation and acts by directly or indirectly controlling the expression of numerous genes in response to nutrient availability. During rapid exponential growth, CodY is highly active and represses genes whose products allow adaptation to nutrient depletion. This is Global transcriptional regulator CodY from Brevibacillus brevis (strain 47 / JCM 6285 / NBRC 100599).